A 325-amino-acid chain; its full sequence is Plasminogen (325 aa).

Kringle domains follow at residues 80–146 (ACVK…VPSC) and 159–217 (LTPA…VLSV). Cystine bridges form between C81–C146, C102–C135, C124–C141, and C188–C212.

This sequence belongs to the peptidase S1 family. Plasminogen subfamily.

Its subcellular location is the secreted. It catalyses the reaction Preferential cleavage: Lys-|-Xaa &gt; Arg-|-Xaa, higher selectivity than trypsin. Converts fibrin into soluble products.. In terms of biological role, plasmin dissolves the fibrin of blood clots and acts as a proteolytic factor in a variety of other processes including embryonic development, tissue remodeling, tumor invasion, and inflammation. This chain is Plasminogen, found in Petromyzon marinus (Sea lamprey).